The following is a 95-amino-acid chain: Integration host factor subunit beta (95 aa).

The interval 56–76 is disordered; sequence RAPRTGRNPKTGTSVDLDGKY.

The protein belongs to the bacterial histone-like protein family. As to quaternary structure, heterodimer of an alpha and a beta chain.

Functionally, this protein is one of the two subunits of integration host factor, a specific DNA-binding protein that functions in genetic recombination as well as in transcriptional and translational control. This chain is Integration host factor subunit beta, found in Shewanella sediminis (strain HAW-EB3).